Reading from the N-terminus, the 206-residue chain is Glutathione peroxidase 1 (206 aa).

Ser37 is subject to Phosphoserine. Residue Sec52 is part of the active site. A non-standard amino acid (selenocysteine) is located at residue Sec52. Lys91, Lys117, and Lys151 each carry N6-acetyllysine; alternate. An N6-succinyllysine; alternate mark is found at Lys91, Lys117, and Lys151. Phosphoserine occurs at positions 200 and 204.

It belongs to the glutathione peroxidase family. As to quaternary structure, homotetramer. Interacts with MIEN1. In terms of processing, during periods of oxidative stress, Sec-52 may react with a superoxide radical, irreversibly lose hydroselenide and be converted to dehydroalanine.

It localises to the cytoplasm. Its subcellular location is the mitochondrion. It catalyses the reaction 2 glutathione + H2O2 = glutathione disulfide + 2 H2O. It carries out the reaction a hydroperoxy polyunsaturated fatty acid + 2 glutathione = a hydroxy polyunsaturated fatty acid + glutathione disulfide + H2O. The catalysed reaction is tert-butyl hydroperoxide + 2 glutathione = tert-butanol + glutathione disulfide + H2O. The enzyme catalyses cumene hydroperoxide + 2 glutathione = 2-phenylpropan-2-ol + glutathione disulfide + H2O. It catalyses the reaction (13S)-hydroperoxy-(9Z,11E)-octadecadienoate + 2 glutathione = (13S)-hydroxy-(9Z,11E)-octadecadienoate + glutathione disulfide + H2O. It carries out the reaction (9S)-hydroperoxy-(10E,12Z)-octadecadienoate + 2 glutathione = (9S)-hydroxy-(10E,12Z)-octadecadienoate + glutathione disulfide + H2O. The catalysed reaction is (5S)-hydroperoxy-(6E,8Z,11Z,14Z)-eicosatetraenoate + 2 glutathione = (5S)-hydroxy-(6E,8Z,11Z,14Z)-eicosatetraenoate + glutathione disulfide + H2O. The enzyme catalyses (12S)-hydroperoxy-(5Z,8Z,10E,14Z)-eicosatetraenoate + 2 glutathione = (12S)-hydroxy-(5Z,8Z,10E,14Z)-eicosatetraenoate + glutathione disulfide + H2O. It catalyses the reaction (12R)-hydroperoxy-(5Z,8Z,10E,14Z)-eicosatetraenoate + 2 glutathione = (12R)-hydroxy-(5Z,8Z,10E,14Z)-eicosatetraenoate + glutathione disulfide + H2O. It carries out the reaction (15S)-hydroperoxy-(5Z,8Z,11Z,13E)-eicosatetraenoate + 2 glutathione = (15S)-hydroxy-(5Z,8Z,11Z,13E)-eicosatetraenoate + glutathione disulfide + H2O. The catalysed reaction is (5S)-hydroperoxy-(6E,8Z,11Z,14Z,17Z)-eicosapentaenoate + 2 glutathione = (5S)-hydroxy-(6E,8Z,11Z,14Z,17Z)-eicosapentaenoate + glutathione disulfide + H2O. The enzyme catalyses (12S)-hydroperoxy-(5Z,8Z,10E,14Z,17Z)-eicosapentaenoate + 2 glutathione = (12S)-hydroxy-(5Z,8Z,10E,14Z,17Z)-eicosapentaenoate + glutathione disulfide + H2O. It catalyses the reaction (15S)-hydroperoxy-(5Z,8Z,11Z,13E,17Z)-eicosapentaenoate + 2 glutathione = (15S)-hydroxy-(5Z,8Z,11Z,13E,17Z)-eicosapentaenoate + glutathione disulfide + H2O. It carries out the reaction (15S)-hydroperoxy-(11Z,13E)-eicosadienoate + 2 glutathione = (15S)-hydroxy-(11Z,13E)-eicosadienoate + glutathione disulfide + H2O. The catalysed reaction is (17S)-hydroperoxy-(4Z,7Z,10Z,13Z,15E,19Z)-docosahexaenoate + 2 glutathione = (17S)-hydroxy-(4Z,7Z,10Z,13Z,15E,19Z)-docosahexaenoate + glutathione disulfide + H2O. Functionally, catalyzes the reduction of hydroperoxides in a glutathione-dependent manner thus regulating cellular redox homeostasis. Can reduce small soluble hydroperoxides such as H2O2, cumene hydroperoxide and tert-butyl hydroperoxide, as well as several fatty acid-derived hydroperoxides. In platelets catalyzes the reduction of 12-hydroperoxyeicosatetraenoic acid, the primary product of the arachidonate 12-lipoxygenase pathway. The polypeptide is Glutathione peroxidase 1 (GPX1) (Sus scrofa (Pig)).